A 103-amino-acid chain; its full sequence is MYAIIETGGKQYRVQEGDTLFVEKLDANQGDIVTIDSVLAVSKDGNLTVGAPMVAGAKVEAKVLEQGKAKKIIIFKYKPKKDYRRKQGHRQPYTKLVIEKINA.

It belongs to the bacterial ribosomal protein bL21 family. As to quaternary structure, part of the 50S ribosomal subunit. Contacts protein L20.

Functionally, this protein binds to 23S rRNA in the presence of protein L20. This is Large ribosomal subunit protein bL21 from Alkaliphilus oremlandii (strain OhILAs) (Clostridium oremlandii (strain OhILAs)).